The primary structure comprises 174 residues: Balbiani ring protein 1 (174 aa).

The interval 28 to 174 is disordered; that stretch reads KCRCTSAGKP…RPEGCGSAMR (147 aa). 8 consecutive repeat copies span residues 42 to 52, 53 to 63, 64 to 74, 75 to 85, 124 to 134, 135 to 145, 146 to 156, and 157 to 167. 4 X 11 AA tandem repeats stretches follow at residues 42 to 85 and 124 to 167; these read EPSK…PRPE. Basic and acidic residues-rich tracts occupy residues 49 to 100 and 121 to 159; these read PRPE…EKCA and RKSE…EKPS.

As to expression, salivary gland.

The protein localises to the secreted. In terms of biological role, used by the larvae to construct a supramolecular structure, the larval tube. This is Balbiani ring protein 1 (BR1) from Chironomus tentans (Midge).